The following is a 118-amino-acid chain: MNILDALDAQSKRTDLPDFRAGDTVKVHARVVEGNRSRVQIFQGVVIRRQGDGLRETFLVRKISFGVGVERTYPINSPAIDRIEVVTRGDVRRAKLYYLRELRGKKAKIKEKREKQPS.

The protein belongs to the bacterial ribosomal protein bL19 family.

Its function is as follows. This protein is located at the 30S-50S ribosomal subunit interface and may play a role in the structure and function of the aminoacyl-tRNA binding site. The polypeptide is Large ribosomal subunit protein bL19 (Salinispora arenicola (strain CNS-205)).